The chain runs to 1423 residues: Protein Shroom2 (1423 aa).

Positions 1–101 (MRPSTVTSRI…PDHTLPKADA (101 aa)) are disordered. A compositionally biased stretch (low complexity) spans 8–27 (SRIWWSESSSSSSHDLSGSW). Composition is skewed to polar residues over residues 28-69 (EHTS…NSSI) and 83-93 (GSFSTCSSTPD). At serine 103 the chain carries Phosphoserine. Residues 116-171 (ASRPGSSRQSQSTGDPQGLQDRPSSFLPRVPGNSSKSPRPEDNIEPKIATSGRSNF) are disordered. The span at 119 to 130 (PGSSRQSQSTGD) shows a compositional bias: polar residues. Phosphoserine occurs at positions 185, 197, and 291. Disordered stretches follow at residues 300–357 (SYHG…VNQK), 586–630 (TSFQ…SAPR), 758–855 (EILS…SGGQ), 872–930 (PSSS…KLTD), and 1045–1085 (VETP…KEKT). The region spanning 575 to 677 (LKEAQTRVLK…SEPEKINEVG (103 aa)) is the ASD1 domain. Positions 761–771 (SEDRKVEKASE) are enriched in basic and acidic residues. Phosphoserine is present on residues serine 806, serine 830, serine 831, and serine 833. At threonine 834 the chain carries Phosphothreonine. The span at 872 to 885 (PSSSVLSSAQPQDS) shows a compositional bias: low complexity. The span at 891 to 923 (DPTSPQPEAQLSSKCQHLQTSTMETSRSPSPQF) shows a compositional bias: polar residues. 2 positions are modified to phosphoserine: serine 918 and serine 920. The span at 1054–1065 (PEPQPPSTPAPP) shows a compositional bias: pro residues. Serine 1072 and serine 1329 each carry phosphoserine. One can recognise an ASD2 domain in the interval 1092 to 1418 (EELAREIVGK…QLKCLFDSLQ (327 aa)).

It belongs to the shroom family. Interacts with F-actin.

It is found in the apical cell membrane. The protein localises to the cell junction. The protein resides in the tight junction. It localises to the cytoplasm. Its subcellular location is the cytoskeleton. Functionally, may be involved in endothelial cell morphology changes during cell spreading. In the retinal pigment epithelium, may regulate the biogenesis of melanosomes and promote their association with the apical cell surface by inducing gamma-tubulin redistribution. The polypeptide is Protein Shroom2 (Shroom2) (Rattus norvegicus (Rat)).